We begin with the raw amino-acid sequence, 370 residues long: Uroporphyrinogen decarboxylase (370 aa).

Substrate is bound by residues 29-33, D79, Y155, S210, and H342; that span reads RQAGR.

Belongs to the uroporphyrinogen decarboxylase family. As to quaternary structure, homodimer.

The protein localises to the cytoplasm. The enzyme catalyses uroporphyrinogen III + 4 H(+) = coproporphyrinogen III + 4 CO2. Its pathway is porphyrin-containing compound metabolism; protoporphyrin-IX biosynthesis; coproporphyrinogen-III from 5-aminolevulinate: step 4/4. In terms of biological role, catalyzes the decarboxylation of four acetate groups of uroporphyrinogen-III to yield coproporphyrinogen-III. This chain is Uroporphyrinogen decarboxylase, found in Acidovorax ebreus (strain TPSY) (Diaphorobacter sp. (strain TPSY)).